A 65-amino-acid chain; its full sequence is uncharacterized protein (65 aa).

This is an uncharacterized protein from Rhizobium fredii (Sinorhizobium fredii).